The chain runs to 387 residues: 3-dehydroquinate synthase (387 aa).

It belongs to the archaeal-type DHQ synthase family.

It carries out the reaction 2-amino-2,3,7-trideoxy-D-lyxo-hept-6-ulosonate + NAD(+) + H2O = 3-dehydroquinate + NH4(+) + NADH + H(+). In terms of biological role, catalyzes the oxidative deamination and cyclization of 2-amino-3,7-dideoxy-D-threo-hept-6-ulosonic acid (ADH) to yield 3-dehydroquinate (DHQ), which is fed into the canonical shikimic pathway of aromatic amino acid biosynthesis. This Halobacterium salinarum (strain ATCC 29341 / DSM 671 / R1) protein is 3-dehydroquinate synthase.